A 435-amino-acid polypeptide reads, in one-letter code: Trigger factor (435 aa).

Residues D161 to P246 form the PPIase FKBP-type domain.

The protein belongs to the FKBP-type PPIase family. Tig subfamily.

It is found in the cytoplasm. It carries out the reaction [protein]-peptidylproline (omega=180) = [protein]-peptidylproline (omega=0). Involved in protein export. Acts as a chaperone by maintaining the newly synthesized protein in an open conformation. Functions as a peptidyl-prolyl cis-trans isomerase. The polypeptide is Trigger factor (Psychromonas ingrahamii (strain DSM 17664 / CCUG 51855 / 37)).